We begin with the raw amino-acid sequence, 297 residues long: Homoserine kinase (297 aa).

82 to 92 (PLTRGLGSSAS) is a binding site for ATP.

The protein belongs to the GHMP kinase family. Homoserine kinase subfamily.

Its subcellular location is the cytoplasm. The enzyme catalyses L-homoserine + ATP = O-phospho-L-homoserine + ADP + H(+). It functions in the pathway amino-acid biosynthesis; L-threonine biosynthesis; L-threonine from L-aspartate: step 4/5. Functionally, catalyzes the ATP-dependent phosphorylation of L-homoserine to L-homoserine phosphate. The polypeptide is Homoserine kinase (Bacillus cereus (strain G9842)).